The primary structure comprises 79 residues: Acyl carrier protein (79 aa).

A Carrier domain is found at 2 to 77 (SDTAERVKKI…DAIDFINQKT (76 aa)). O-(pantetheine 4'-phosphoryl)serine is present on S37.

Belongs to the acyl carrier protein (ACP) family. 4'-phosphopantetheine is transferred from CoA to a specific serine of apo-ACP by AcpS. This modification is essential for activity because fatty acids are bound in thioester linkage to the sulfhydryl of the prosthetic group.

It localises to the cytoplasm. It participates in lipid metabolism; fatty acid biosynthesis. Functionally, carrier of the growing fatty acid chain in fatty acid biosynthesis. In Rhodospirillum centenum (strain ATCC 51521 / SW), this protein is Acyl carrier protein.